The sequence spans 227 residues: Uracil-DNA glycosylase (227 aa).

Catalysis depends on Asp68, which acts as the Proton acceptor.

This sequence belongs to the uracil-DNA glycosylase (UDG) superfamily. UNG family.

The protein resides in the cytoplasm. The catalysed reaction is Hydrolyzes single-stranded DNA or mismatched double-stranded DNA and polynucleotides, releasing free uracil.. Excises uracil residues from the DNA which can arise as a result of misincorporation of dUMP residues by DNA polymerase or due to deamination of cytosine. The chain is Uracil-DNA glycosylase from Mycobacterium avium (strain 104).